Here is a 193-residue protein sequence, read N- to C-terminus: MGVDLTGVQKKKRVVRHHTYSTNPYIKLLIKLYKFLAQRTNSAFNKLVHQRLLKSRSNRAPISLSRIAVCMKRKSVWLEKGKKAPIAVIVGDVLDDVRMARIPALRVCALRFSKSARERITGAGGECLTFDQLAMVAPTGKNTFLLRGRKSGRESVKHFGAAGVPGSHAKPFTSNRGKERQRSSARRRAFRHK.

Residues H158–K193 form a disordered region. The span at S183–K193 shows a compositional bias: basic residues.

Belongs to the eukaryotic ribosomal protein eL18 family.

It is found in the cytoplasm. The protein is Large ribosomal subunit protein eL18 (RPL18) of Trypanosoma cruzi (strain CL Brener).